The chain runs to 1217 residues: Inactive disease resistance protein RPS4 (1217 aa).

The 162-residue stretch at 14–175 (PQHQVFINFR…EIVKAVKTAL (162 aa)) folds into the TIR domain. Residue E88 is part of the active site. The 262-residue stretch at 211–472 (EQRLKDLEEK…FRSQDKDYVE (262 aa)) folds into the NB-ARC domain. LRR repeat units follow at residues 260–285 (HALI…LLGE), 436–459 (PNIV…AFLD), 614–636 (LKEV…DFNP), 637–659 (INLV…DKDT), 682–706 (AEKL…MKKM), 708–728 (MLAF…EMNL), 729–749 (ISLK…PLIS), 750–774 (DNIE…KLQR), 796–818 (LKAL…EIDI), 819–842 (SFLN…SVQY), and 861–887 (LSQL…NLQC). The tract at residues 1162–1195 (TEGVDGRVKKKKKTRMDNGRPKKKQRSGRDDNQT) is disordered. Residues 1170-1177 (KKKKKTRM) carry the Nuclear localization signal motif.

In terms of assembly, interacts with EDS1.

It is found in the nucleus. The enzyme catalyses NAD(+) + H2O = ADP-D-ribose + nicotinamide + H(+). The sequence is that of Inactive disease resistance protein RPS4 (RPS4) from Arabidopsis thaliana (Mouse-ear cress).